A 488-amino-acid polypeptide reads, in one-letter code: Protein nucleotidyltransferase YdiU (488 aa).

Residues glycine 91, glycine 93, arginine 94, lysine 114, aspartate 126, glycine 127, arginine 177, and arginine 184 each coordinate ATP. Aspartate 253 acts as the Proton acceptor in catalysis. The Mg(2+) site is built by asparagine 254 and aspartate 263. Aspartate 263 is a binding site for ATP.

It belongs to the SELO family. It depends on Mg(2+) as a cofactor. The cofactor is Mn(2+).

It carries out the reaction L-seryl-[protein] + ATP = 3-O-(5'-adenylyl)-L-seryl-[protein] + diphosphate. The enzyme catalyses L-threonyl-[protein] + ATP = 3-O-(5'-adenylyl)-L-threonyl-[protein] + diphosphate. The catalysed reaction is L-tyrosyl-[protein] + ATP = O-(5'-adenylyl)-L-tyrosyl-[protein] + diphosphate. It catalyses the reaction L-histidyl-[protein] + UTP = N(tele)-(5'-uridylyl)-L-histidyl-[protein] + diphosphate. It carries out the reaction L-seryl-[protein] + UTP = O-(5'-uridylyl)-L-seryl-[protein] + diphosphate. The enzyme catalyses L-tyrosyl-[protein] + UTP = O-(5'-uridylyl)-L-tyrosyl-[protein] + diphosphate. Functionally, nucleotidyltransferase involved in the post-translational modification of proteins. It can catalyze the addition of adenosine monophosphate (AMP) or uridine monophosphate (UMP) to a protein, resulting in modifications known as AMPylation and UMPylation. This is Protein nucleotidyltransferase YdiU from Bacillus cereus (strain B4264).